The sequence spans 142 residues: Large ribosomal subunit protein uL13 (142 aa).

This sequence belongs to the universal ribosomal protein uL13 family. Part of the 50S ribosomal subunit.

In terms of biological role, this protein is one of the early assembly proteins of the 50S ribosomal subunit, although it is not seen to bind rRNA by itself. It is important during the early stages of 50S assembly. The protein is Large ribosomal subunit protein uL13 of Burkholderia mallei (strain NCTC 10247).